Consider the following 206-residue polypeptide: Methylthioribulose-1-phosphate dehydratase (206 aa).

Residues histidine 96 and histidine 98 each contribute to the Zn(2+) site.

It belongs to the aldolase class II family. MtnB subfamily. Zn(2+) is required as a cofactor.

The enzyme catalyses 5-(methylsulfanyl)-D-ribulose 1-phosphate = 5-methylsulfanyl-2,3-dioxopentyl phosphate + H2O. It participates in amino-acid biosynthesis; L-methionine biosynthesis via salvage pathway; L-methionine from S-methyl-5-thio-alpha-D-ribose 1-phosphate: step 2/6. In terms of biological role, catalyzes the dehydration of methylthioribulose-1-phosphate (MTRu-1-P) into 2,3-diketo-5-methylthiopentyl-1-phosphate (DK-MTP-1-P). This is Methylthioribulose-1-phosphate dehydratase from Azotobacter vinelandii (strain DJ / ATCC BAA-1303).